Consider the following 58-residue polypeptide: ATP synthase F(0) complex subunit k, mitochondrial (58 aa).

An N6-acetyllysine mark is found at Lys16 and Lys17. The helical transmembrane segment at 23–45 threads the bilayer; the sequence is TLTGRMNCVLATYGGIALLVLYF.

In terms of assembly, component of the ATP synthase complex composed at least of ATP5F1A/subunit alpha, ATP5F1B/subunit beta, ATP5MC1/subunit c (homooctomer), MT-ATP6/subunit a, MT-ATP8/subunit 8, ATP5ME/subunit e, ATP5MF/subunit f, ATP5MG/subunit g, ATP5MK/subunit k, ATP5MJ/subunit j, ATP5F1C/subunit gamma, ATP5F1D/subunit delta, ATP5F1E/subunit epsilon, ATP5PF/subunit F6, ATP5PB/subunit b, ATP5PD/subunit d, ATP5PO/subunit OSCP. ATP synthase complex consists of a soluble F(1) head domain (subunits alpha(3) and beta(3)) - the catalytic core - and a membrane F(0) domain - the membrane proton channel (subunits c, a, 8, e, f, g, k and j). These two domains are linked by a central stalk (subunits gamma, delta, and epsilon) rotating inside the F1 region and a stationary peripheral stalk (subunits F6, b, d, and OSCP). The ATP synthase complex/complex V exists as a monomeric and a dimeric supercomplex that helps shape mitochondrial cristae to optimize proton flow.

The protein resides in the mitochondrion membrane. Subunit k, of the mitochondrial membrane ATP synthase complex (F(1)F(0) ATP synthase or Complex V) that produces ATP from ADP in the presence of a proton gradient across the membrane which is generated by electron transport complexes of the respiratory chain. ATP synthase complex consist of a soluble F(1) head domain - the catalytic core - and a membrane F(1) domain - the membrane proton channel. These two domains are linked by a central stalk rotating inside the F(1) region and a stationary peripheral stalk. During catalysis, ATP synthesis in the catalytic domain of F(1) is coupled via a rotary mechanism of the central stalk subunits to proton translocation. In vivo, can only synthesize ATP although its ATP hydrolase activity can be activated artificially in vitro. Part of the complex F(0) domain. Required for dimerization of the ATP synthase complex and as such regulates ATP synthesis in the mitochondria. This is ATP synthase F(0) complex subunit k, mitochondrial from Mus musculus (Mouse).